The following is a 533-amino-acid chain: Beta-glucosidase 24 (533 aa).

The first 26 residues, 1 to 26, serve as a signal peptide directing secretion; the sequence is MVLQKLPLMSIGLLWLLIIVGPLVNA. Glutamine 58 lines the a beta-D-glucoside pocket. Asparagine 64 and asparagine 88 each carry an N-linked (GlcNAc...) asparagine glycan. Residues histidine 161 and 206 to 207 each bind a beta-D-glucoside; that span reads NE. Glutamate 207 acts as the Proton donor in catalysis. A disulfide bond links cysteine 226 and cysteine 239. Tyrosine 355 is an a beta-D-glucoside binding site. An N-linked (GlcNAc...) asparagine glycan is attached at asparagine 388. An a beta-D-glucoside-binding site is contributed by glutamate 427. Glutamate 427 acts as the Nucleophile in catalysis. N-linked (GlcNAc...) asparagine glycans are attached at residues asparagine 437, asparagine 442, and asparagine 470. A beta-D-glucoside is bound by residues tryptophan 477, 484-485, and phenylalanine 493; that span reads EW. Asparagine 503 carries N-linked (GlcNAc...) asparagine glycosylation. The Prevents secretion from ER motif lies at 530–533; the sequence is KDEL.

The protein belongs to the glycosyl hydrolase 1 family.

It is found in the endoplasmic reticulum lumen. The catalysed reaction is Hydrolysis of terminal, non-reducing beta-D-glucosyl residues with release of beta-D-glucose.. In Arabidopsis thaliana (Mouse-ear cress), this protein is Beta-glucosidase 24.